Reading from the N-terminus, the 98-residue chain is NADH-ubiquinone oxidoreductase chain 4L (98 aa).

The next 3 helical transmembrane spans lie at 2–22, 29–49, and 61–81; these read PSIS…MLIF, SLLC…LTIL, and ILLL…LVTV.

The protein belongs to the complex I subunit 4L family. In terms of assembly, core subunit of respiratory chain NADH dehydrogenase (Complex I) which is composed of 45 different subunits.

Its subcellular location is the mitochondrion inner membrane. It catalyses the reaction a ubiquinone + NADH + 5 H(+)(in) = a ubiquinol + NAD(+) + 4 H(+)(out). Core subunit of the mitochondrial membrane respiratory chain NADH dehydrogenase (Complex I) which catalyzes electron transfer from NADH through the respiratory chain, using ubiquinone as an electron acceptor. Part of the enzyme membrane arm which is embedded in the lipid bilayer and involved in proton translocation. The chain is NADH-ubiquinone oxidoreductase chain 4L (MT-ND4L) from Eulemur rubriventer (Red-bellied lemur).